A 185-amino-acid chain; its full sequence is Elongation factor P (185 aa).

This sequence belongs to the elongation factor P family.

Its subcellular location is the cytoplasm. It functions in the pathway protein biosynthesis; polypeptide chain elongation. In terms of biological role, involved in peptide bond synthesis. Stimulates efficient translation and peptide-bond synthesis on native or reconstituted 70S ribosomes in vitro. Probably functions indirectly by altering the affinity of the ribosome for aminoacyl-tRNA, thus increasing their reactivity as acceptors for peptidyl transferase. The protein is Elongation factor P of Lysinibacillus sphaericus (strain C3-41).